The primary structure comprises 137 residues: 3-hydroxyacyl-[acyl-carrier-protein] dehydratase FabZ (137 aa).

The active site involves histidine 46.

It belongs to the thioester dehydratase family. FabZ subfamily.

It is found in the cytoplasm. It catalyses the reaction a (3R)-hydroxyacyl-[ACP] = a (2E)-enoyl-[ACP] + H2O. Its function is as follows. Involved in unsaturated fatty acids biosynthesis. Catalyzes the dehydration of short chain beta-hydroxyacyl-ACPs and long chain saturated and unsaturated beta-hydroxyacyl-ACPs. The chain is 3-hydroxyacyl-[acyl-carrier-protein] dehydratase FabZ from Thermotoga neapolitana (strain ATCC 49049 / DSM 4359 / NBRC 107923 / NS-E).